The sequence spans 584 residues: ATP-dependent ubiquitin transferase-like protein Cap2 (584 aa).

The segment at 1–137 is E2-like domain; that stretch reads MKQELHHTLL…SGTSNDVELE (137 aa). C90 (for E2-like domain) is an active-site residue. Positions 138–338 are linker domain; that stretch reads GEFSAYWQSE…LLSRNQSRPD (201 aa). Positions 339-584 are adenylation plus E1-like domain; sequence VGNLSQKRIA…RFSGCNICDE (246 aa). Catalysis depends on C522, which acts as the For E1-like domain.

In the C-terminal section; belongs to the HesA/MoeB/ThiF family. In terms of assembly, interacts with CD-NTase DncV in the presence and absence of phage T2. A Cap2 dimer is bound on either side by a DncV monomer.

CD-NTase priming component of a CBASS antiviral system. CBASS (cyclic oligonucleotide-based antiphage signaling system) provides immunity against bacteriophages. The CD-NTase protein (DncV) synthesizes cyclic nucleotides in response to infection; these serve as specific second messenger signals. The signals activate a diverse range of effectors, leading to bacterial cell death and thus abortive phage infection. A type II-A(GA) CBASS system. Functionally, primes DncV; acts as a protein transferase, conjugating DncV, the CD-NTase, to unidentified target(s) in the cell via an E1-E2 ubiquitin transferase-like mechanism. During the conjugation reaction DncV is probably transiently attached to AMP. Protein conjugation requires ATP. In terms of biological role, protects E.coli against phage infection. When the CBASS operon (capV-dncV-cap2-cap3) is introduced in E.coli MG1655 there is about 100-fold protection against phages P1 and T2. When the operon is introduced in E.coli MG1655 there is a more than 10(3) decrease in the efficiency of T2 plaque formation. Protects 100-fold against phage T5, offers no protection against T7. When the operon is introduced in E.coli MG1655 it protects against phages T2, T4, T5 and T6. Another paper shows the operon confers protection against phages P1, T2, T5 and T6 but not T4 or lambda. This Vibrio cholerae serotype O1 (strain ATCC 39315 / El Tor Inaba N16961) protein is ATP-dependent ubiquitin transferase-like protein Cap2.